Here is a 179-residue protein sequence, read N- to C-terminus: Cell division protein SepF (179 aa).

The disordered stretch occupies residues 18 to 57 (EDSTVPYEKGNEPVFTPVNSSQEPDLPMNQPSQSAGAKDS). Over residues 34–57 (PVNSSQEPDLPMNQPSQSAGAKDS) the composition is skewed to polar residues.

It belongs to the SepF family. In terms of assembly, homodimer. Interacts with FtsZ.

It localises to the cytoplasm. Cell division protein that is part of the divisome complex and is recruited early to the Z-ring. Probably stimulates Z-ring formation, perhaps through the cross-linking of FtsZ protofilaments. Its function overlaps with FtsA. The sequence is that of Cell division protein SepF from Streptococcus pneumoniae (strain Hungary19A-6).